A 214-amino-acid polypeptide reads, in one-letter code: Probable transaldolase (214 aa).

Residue lysine 83 is the Schiff-base intermediate with substrate of the active site.

The protein belongs to the transaldolase family. Type 3B subfamily.

The protein resides in the cytoplasm. The enzyme catalyses D-sedoheptulose 7-phosphate + D-glyceraldehyde 3-phosphate = D-erythrose 4-phosphate + beta-D-fructose 6-phosphate. It participates in carbohydrate degradation; pentose phosphate pathway; D-glyceraldehyde 3-phosphate and beta-D-fructose 6-phosphate from D-ribose 5-phosphate and D-xylulose 5-phosphate (non-oxidative stage): step 2/3. Functionally, transaldolase is important for the balance of metabolites in the pentose-phosphate pathway. This is Probable transaldolase from Desulfosudis oleivorans (strain DSM 6200 / JCM 39069 / Hxd3) (Desulfococcus oleovorans).